The following is a 301-amino-acid chain: Mitochondrial import receptor subunit TOM40 homolog (301 aa).

The interval 1–20 (MATPTESEFAAPIPQTNPGS) is disordered.

It belongs to the Tom40 family. Forms part of the preprotein translocase complex of the outer mitochondrial membrane (TOM complex). Interacts with mitochondrial targeting sequences.

The protein localises to the mitochondrion outer membrane. In terms of biological role, channel-forming protein essential for import of protein precursors into mitochondria. Specifically required for nnt-1 accumulation in the mitochondria and may be involved in the secretion of daf-28/insulin from the mitochondria. Required for embryonic and larval development. The protein is Mitochondrial import receptor subunit TOM40 homolog of Caenorhabditis briggsae.